Reading from the N-terminus, the 536-residue chain is Global nitrogen regulator NrpR (536 aa).

The winged helix-turn-helix stretch occupies residues 7–72; it reads VEILSILSEA…EITEKGIEEL (66 aa). 2 NRD regions span residues 80–314 and 315–536; these read RIGS…KGKF and KVTP…YDDI.

The protein belongs to the NrpR family. In terms of assembly, homotetramer. Binds to a single operator as a dimer and cooperatively to two operators as a dimer pair.

With respect to regulation, under nitrogen limitation, binding of the intracellular nitrogen metabolite 2-oxoglutarate to NrpR decreases the binding affinity of NrpR to DNA, leading to initiation of transcription. Transcriptional repressor of nitrogen fixation and assimilation genes. Binds to two tandem operators in the glnA and nif promoters, thereby blocking transcription of the genes. The sequence is that of Global nitrogen regulator NrpR from Methanococcus maripaludis (strain DSM 14266 / JCM 13030 / NBRC 101832 / S2 / LL).